The sequence spans 129 residues: UPF0102 protein RD1_1191 (129 aa).

It belongs to the UPF0102 family.

The polypeptide is UPF0102 protein RD1_1191 (Roseobacter denitrificans (strain ATCC 33942 / OCh 114) (Erythrobacter sp. (strain OCh 114))).